We begin with the raw amino-acid sequence, 558 residues long: Formate--tetrahydrofolate ligase (558 aa).

65–72 provides a ligand contact to ATP; the sequence is TPAGEGKT.

Belongs to the formate--tetrahydrofolate ligase family.

It catalyses the reaction (6S)-5,6,7,8-tetrahydrofolate + formate + ATP = (6R)-10-formyltetrahydrofolate + ADP + phosphate. It participates in one-carbon metabolism; tetrahydrofolate interconversion. This Methylobacterium sp. (strain 4-46) protein is Formate--tetrahydrofolate ligase.